The chain runs to 781 residues: Translation initiation factor IF-2 (781 aa).

The tract at residues 44 to 195 is disordered; the sequence is RQLDNAVDGT…TPPKPKELPE (152 aa). The span at 53-65 shows a compositional bias: basic and acidic residues; it reads TNKKAEAPKKETT. Over residues 66–81 the composition is skewed to polar residues; the sequence is SNENGNSKGPNKPNMT. Over residues 82–93 the composition is skewed to low complexity; that stretch reads NSNEKSNKPNKP. Positions 115–126 are enriched in polar residues; it reads KPANTGNQTQAS. A compositionally biased stretch (low complexity) spans 127 to 169; that stretch reads GNQQAGGQKRNNNNNSNRPGGGNPNRPGGNNRPNRGGNFNNKG. The region spanning 282–451 is the tr-type G domain; that stretch reads ERPPVVTIMG…LLVSEVEELK (170 aa). Residues 291-298 are G1; it reads GHVDHGKT. A GTP-binding site is contributed by 291–298; the sequence is GHVDHGKT. The tract at residues 316 to 320 is G2; the sequence is GITQH. Positions 337–340 are G3; sequence DTPG. GTP contacts are provided by residues 337–341 and 391–394; these read DTPGH and NKID. The G4 stretch occupies residues 391–394; it reads NKID. The tract at residues 427–429 is G5; it reads SAK.

This sequence belongs to the TRAFAC class translation factor GTPase superfamily. Classic translation factor GTPase family. IF-2 subfamily.

It localises to the cytoplasm. Functionally, one of the essential components for the initiation of protein synthesis. Protects formylmethionyl-tRNA from spontaneous hydrolysis and promotes its binding to the 30S ribosomal subunits. Also involved in the hydrolysis of GTP during the formation of the 70S ribosomal complex. The polypeptide is Translation initiation factor IF-2 (Listeria monocytogenes serotype 4a (strain HCC23)).